Reading from the N-terminus, the 993-residue chain is MTCLFPRALGSLALLMVVLLVQGELHVKPGGQHREDGTALQLAKRRYKREWVKFAKPCREREDNSRRNPIAKITSDFQKNQKITYRISGVGIDQPPFGIFVVDPNNGDINITAIVDREETPSFLITCRALNALGQDVERPLILTVKILDVNDNPPIFSQTIFKGEIEENSASNSLVMILNATDADEPNHMNSKIAFKIVSQEPAGMSMFLISRNTGEVRTLTSSLDREQISSYHLVVSGADNDGTGLSTQCECSIKIKDVNDNFPVLRESQYSARIEENTLNAELLRFQVTDWDEEYTDNWLAVYFFTSGNEGNWFEIETDPRTNEGILKVVKALDYEQVQSMQFSIAVRNKAEFHQSVISQYRVQSTPVTIQVIDVREGISFRPPSKTFTVQRGVSTNKLVGYILGTYQATDEDTGKAASSVRYVLGRNDGGLLVIDSKTAQIKFVKNIDRDSTFIVNKTISAEVLAIDENTGKTSTGTIYVEVPSFNENCPSVVLEKKDICTSSPSVTLSVRTLDRGKYTGPYTVSLEEQPLKLPVMWTITTLNATSALLQAQQQVSPGVYNVPVIVKDNQDGLCDTPESLTLTVCQCDDRSMCRAPIPSREPNTYGESSWRLGPAAIGLILLGLLMLLLAPLLLLTCDCGSGPIGGAATGGFIPVPDGSEGTIHQWGIEGAQPEDKEITNICVPPVTTNGADFMESSEVCTNTYAGGTMVEGASGMEMITKLGGATGATAALGPCSLGYSGTMRTRHSTGGTLKDYAAPVNMTFLGSYFSQKSLAYAEEEDEREVNDCLLIYDDEGEDAAPHSPTLSSCSIFGDDLDDNFLDSLGPKFKKLAEICLGIDDEAKQAKPGPKDSGSGADTCARSMEVPQSGSNRYQTLPGSLEVTQTGSKICHTLSGNQETSVMSTSGSVHPAVAIPDPLQLGNYLLTETYSTSGSFAQPTTVTFDPHVTQNVTVTERVICPLPSASSSIVAPTELRGSYNMLYTKETCSHL.

An N-terminal signal peptide occupies residues 1–23; the sequence is MTCLFPRALGSLALLMVVLLVQG. Residues 24-49 constitute a propeptide that is removed on maturation; it reads ELHVKPGGQHREDGTALQLAKRRYKR. Cadherin domains lie at 50–157, 158–267, 268–388, and 384–495; these read EWVK…PPIF, SQTI…FPVL, RESQ…PPSK, and RPPS…CPSV. The Extracellular portion of the chain corresponds to 50-617; that stretch reads EWVKFAKPCR…YGESSWRLGP (568 aa). Asparagine 110 and asparagine 180 each carry an N-linked (GlcNAc...) asparagine glycan. Residues asparagine 459 and asparagine 546 are each glycosylated (N-linked (GlcNAc...) asparagine). A helical membrane pass occupies residues 618–638; the sequence is AAIGLILLGLLMLLLAPLLLL. The Cytoplasmic segment spans residues 639-993; it reads TCDCGSGPIG…LYTKETCSHL (355 aa). Residues 641–714 form a required for interaction with CTNND1 and localization at cell-cell junctions region; sequence DCGSGPIGGA…NTYAGGTMVE (74 aa). Residues 845–876 are disordered; the sequence is AKQAKPGPKDSGSGADTCARSMEVPQSGSNRY. 2 Desmoglein repeat repeats span residues 905–930 and 931–961; these read MSTS…LLTE and TYST…ERVI.

Homodimer. Part of a complex that contains DSG3, PKP1, YAP1 and YWHAG; the complex is required for localization of DSG3 and YAP1 to the cell membrane in keratinocytes. Interacts with PKP2. Interacts with CTNND1; the interaction facilitates DSG3 localization and retention at cell-cell junctions. Interacts with CDH1; the interaction is required for CDH1 localization to developing adherens junctions. Interacts with RAC1; the interaction is required for DSG3 translocation to cell-cell junctions, organization of cortical F-actin bundles and actin anchoring at cell-cell junctions. Interacts with DSC3; the interaction may limit the interaction of DSC3 with p38MAPK family members and therefore repress p38MAPK signaling activation. Expressed in the basal layer of the outer root sheath of the telogen hair club, specifically at the cell membrane between the apex of the cells and the surrounding hair club (at protein level). Expression is less abundant between the lateral margins of the outer root sheath basal cells (at protein level). Expressed in epidermis. Expressed in the epithelium of the tongue.

It is found in the cell membrane. It localises to the cell junction. Its subcellular location is the desmosome. The protein localises to the cytoplasm. The protein resides in the tight junction. A component of desmosome cell-cell junctions which are required for positive regulation of cellular adhesion. Required for adherens and desmosome junction assembly in response to mechanical force in keratinocytes. Required for desmosome-mediated cell-cell adhesion of cells surrounding the telogen hair club and the basal layer of the outer root sheath epithelium, consequently is essential for the anchoring of telogen hairs in the hair follicle. Required for the maintenance of the epithelial barrier via promoting desmosome-mediated intercellular attachment of suprabasal epithelium to basal cells. May play a role in the protein stability of the desmosome plaque components DSP, JUP, PKP1, PKP2 and PKP3. Required for YAP1 localization at the plasma membrane in keratinocytes in response to mechanical strain, via the formation of an interaction complex composed of DSG3, PKP1 and YWHAG. May also be involved in the positive regulation of YAP1 target gene transcription and as a result cell proliferation. Positively regulates cellular contractility and cell junction formation via organization of cortical F-actin bundles and anchoring of actin to tight junctions, in conjunction with RAC1. The cytoplasmic pool of DSG3 is required for the localization of CDH1 and CTNNB1 at developing adherens junctions, potentially via modulation of SRC activity. Inhibits keratinocyte migration via suppression of p38MAPK signaling, may therefore play a role in moderating wound healing. This is Desmoglein-3 (Dsg3) from Mus musculus (Mouse).